A 303-amino-acid polypeptide reads, in one-letter code: UDP-3-O-acyl-N-acetylglucosamine deacetylase (303 aa).

Residues His78, His237, and Asp241 each contribute to the Zn(2+) site. The active-site Proton donor is His264.

Belongs to the LpxC family. The cofactor is Zn(2+).

The catalysed reaction is a UDP-3-O-[(3R)-3-hydroxyacyl]-N-acetyl-alpha-D-glucosamine + H2O = a UDP-3-O-[(3R)-3-hydroxyacyl]-alpha-D-glucosamine + acetate. It functions in the pathway glycolipid biosynthesis; lipid IV(A) biosynthesis; lipid IV(A) from (3R)-3-hydroxytetradecanoyl-[acyl-carrier-protein] and UDP-N-acetyl-alpha-D-glucosamine: step 2/6. Its function is as follows. Catalyzes the hydrolysis of UDP-3-O-myristoyl-N-acetylglucosamine to form UDP-3-O-myristoylglucosamine and acetate, the committed step in lipid A biosynthesis. The sequence is that of UDP-3-O-acyl-N-acetylglucosamine deacetylase from Teredinibacter turnerae (strain ATCC 39867 / T7901).